An 865-amino-acid polypeptide reads, in one-letter code: V-type proton ATPase 116 kDa subunit a 3 (865 aa).

Topologically, residues 1–409 (MGSIYRSEHM…VNPAPWTIIS (409 aa)) are cytoplasmic. The stretch at 51–121 (FVNEVRRCDE…NKNCKVLKNN (71 aa)) forms a coiled coil. The chain crosses the membrane as a helical span at residues 410–430 (FPFLFAVMFGDAGHGIIMLIA). Residues 431–453 (ASAFVIFEKKLISMKIKDEIFNT) are Extracellular-facing. Residues 454–474 (FFGGRYVVLLMGMFAIYTGFI) form a helical membrane-spanning segment. The Cytoplasmic portion of the chain corresponds to 475 to 556 (YNDFYSKSVN…FLNPMKMKTS (82 aa)). The helical transmembrane segment at 557-577 (ILLGISQMAFGIMLSLMNHIG) threads the bilayer. A glycan (N-linked (GlcNAc...) asparagine) is linked at Asn578. Over 578 to 583 (NRSVVD) the chain is Extracellular. A helical transmembrane segment spans residues 584-604 (IVFVFIPQCLFLGCIFVYLCL). Topologically, residues 605-623 (QVLMKWIFFYVKPAYIFGR) are cytoplasmic. A helical transmembrane segment spans residues 624-644 (LYPGSNCAPSLLIGLINMFMV). The Extracellular segment spans residues 645–688 (KSRDASFAHDVGTAAGKEWVIVNGQNVTYTINDQCYLQQWYPNQ). 2 N-linked (GlcNAc...) asparagine glycosylation sites follow: Asn670 and Asn687. Residues 689-709 (SLVELILLLIAVVSVPVMLLV) traverse the membrane as a helical segment. The Cytoplasmic segment spans residues 710-798 (KPFYIRWRHS…LTMGGWGGSA (89 aa)). A helical transmembrane segment spans residues 799-819 (AITILFYFIFSILSVCILILM). The Extracellular portion of the chain corresponds to 820-865 (EGLSAFLHAIRLHWVEFQSKFYGGTGIQFEPFCFTKIIRVYEGLDQ).

Belongs to the V-ATPase 116 kDa subunit family. As to quaternary structure, V-ATPase is a heteromultimeric enzyme made up of two complexes: the ATP-hydrolytic V1 complex and the proton translocation V0 complex. The V1 complex consists of three catalytic AB heterodimers that form a heterohexamer, three peripheral stalks each consisting of EG heterodimers, one central rotor including subunits D and F, and the regulatory subunits C and H. The proton translocation complex V0 consists of the proton transport subunit a, a ring of proteolipid subunits c9c'', rotary subunit d, subunits e and f, and the accessory subunits vah-19/Ac45 and vah-20/PRR. Interacts with V-type proton ATPase subunit C vha-11.

It localises to the apical cell membrane. Functionally, subunit of the V0 complex of vacuolar(H+)-ATPase (V-ATPase), a multisubunit enzyme composed of a peripheral complex (V1) that hydrolyzes ATP and a membrane integral complex (V0) that translocates protons. V-ATPase is responsible for acidifying and maintaining the pH of intracellular compartments and in some cell types, is targeted to the plasma membrane, where it is responsible for acidifying the extracellular environment. In the intestine, required for the rhythmic defecation behavior by promoting acidification in the gut lumen following defecation. Also, luminal acidification is required for nutrient uptake. The protein is V-type proton ATPase 116 kDa subunit a 3 of Caenorhabditis elegans.